Reading from the N-terminus, the 123-residue chain is Small ribosomal subunit protein uS12 (123 aa).

Residues 1–24 (MPTINQLIRKERKKQVKKSKSPAL) form a disordered region. Residues 10–20 (KERKKQVKKSK) are compositionally biased toward basic residues. Aspartate 89 carries the 3-methylthioaspartic acid modification.

The protein belongs to the universal ribosomal protein uS12 family. As to quaternary structure, part of the 30S ribosomal subunit. Contacts proteins S8 and S17. May interact with IF1 in the 30S initiation complex.

Functionally, with S4 and S5 plays an important role in translational accuracy. Interacts with and stabilizes bases of the 16S rRNA that are involved in tRNA selection in the A site and with the mRNA backbone. Located at the interface of the 30S and 50S subunits, it traverses the body of the 30S subunit contacting proteins on the other side and probably holding the rRNA structure together. The combined cluster of proteins S8, S12 and S17 appears to hold together the shoulder and platform of the 30S subunit. The chain is Small ribosomal subunit protein uS12 from Sulfurovum sp. (strain NBC37-1).